Consider the following 531-residue polypeptide: MAAKQLQFDEEARRSLERGVDTLADTVKVTLGPKGRYVVLDKKWGAPTITNDGVTVAKEVDLTDPYENLGAQLAKEVATKTNDVAGDGTTTATVLAQALVHEGLRAVASGANPVGLKRGIEKAVDAVVEELRSISRAIDTTSDMASVATISSRDETIGALIAEAFDKVGKDGVITVDESQTFGTELDFTEGMQFDKGYLSPYMVTDQDRMEAVIEDPYILIHSGKISSMNDLLPLLEKVIAAHGSLFIVAEDVDGEALSTLVVNKIRGTFSSVAVKAPAFGDRRKAMLQDIATLTGGQVVAPEVGLKLDQVGLEVLGRAKKVVVTKDNTTIVDGAGDKADVEGRVIQLRAEYDNSDSEWDREKLQERIAKLAGGVCVIRVGAATEVELNEKKHRIEDAVSATRAAIEEGIVAGGGSALIHAAHVLDGDLHLEGDEKAGVQIVAKAVREPLRWIAENGGEPGYVIVSKVAEMEPGHGYNGKTGQYVDLIADGVIDPLKVTRSALANAASIASLLLTTETLVVDKPEEDNEDK.

ATP-binding positions include 30 to 33, 87 to 91, glycine 414, and aspartate 494; these read TLGP and DGTTT.

This sequence belongs to the chaperonin (HSP60) family. As to quaternary structure, forms a cylinder of 14 subunits composed of two heptameric rings stacked back-to-back. Interacts with the co-chaperonin GroES.

It is found in the cytoplasm. It catalyses the reaction ATP + H2O + a folded polypeptide = ADP + phosphate + an unfolded polypeptide.. Functionally, together with its co-chaperonin GroES, plays an essential role in assisting protein folding. The GroEL-GroES system forms a nano-cage that allows encapsulation of the non-native substrate proteins and provides a physical environment optimized to promote and accelerate protein folding. This chain is Chaperonin GroEL 2, found in Cutibacterium acnes (strain DSM 16379 / KPA171202) (Propionibacterium acnes).